Here is a 206-residue protein sequence, read N- to C-terminus: Thymidylate kinase (206 aa).

ATP is bound at residue 11–18 (GIDGAGKT).

It belongs to the thymidylate kinase family.

It catalyses the reaction dTMP + ATP = dTDP + ADP. Phosphorylation of dTMP to form dTDP in both de novo and salvage pathways of dTTP synthesis. The polypeptide is Thymidylate kinase (Burkholderia thailandensis (strain ATCC 700388 / DSM 13276 / CCUG 48851 / CIP 106301 / E264)).